The sequence spans 238 residues: uncharacterized protein (238 aa).

This sequence to M.thermoautotrophicum MTH564.

This is an uncharacterized protein from Methanocaldococcus jannaschii (strain ATCC 43067 / DSM 2661 / JAL-1 / JCM 10045 / NBRC 100440) (Methanococcus jannaschii).